The primary structure comprises 461 residues: D-phenylhydantoinase (461 aa).

Residues H59, H61, and K151 each contribute to the a divalent metal cation site. Residue K151 is modified to N6-carboxylysine. Y156 is a binding site for substrate. 2 residues coordinate a divalent metal cation: H182 and H239. S286 is a binding site for substrate. D313 contacts a divalent metal cation. N335 lines the substrate pocket.

This sequence belongs to the metallo-dependent hydrolases superfamily. Hydantoinase/dihydropyrimidinase family. In terms of assembly, homotetramer. The cofactor is a divalent metal cation. Carboxylation allows a single lysine to coordinate two divalent metal cations.

It catalyses the reaction D-5-phenylhydantoin + H2O = N-carbamoyl-D-phenylglycine + H(+). Functionally, catalyzes the stereospecific hydrolysis of the cyclic amide bond of D-hydantoin derivatives with an aromatic side chains at the 5'-position. Has no activity on dihydropyrimidines. The physiological function is unknown. The sequence is that of D-phenylhydantoinase from Escherichia coli O17:K52:H18 (strain UMN026 / ExPEC).